Reading from the N-terminus, the 236-residue chain is 2-C-methyl-D-erythritol 4-phosphate cytidylyltransferase (236 aa).

This sequence belongs to the IspD/TarI cytidylyltransferase family. IspD subfamily.

It carries out the reaction 2-C-methyl-D-erythritol 4-phosphate + CTP + H(+) = 4-CDP-2-C-methyl-D-erythritol + diphosphate. The protein operates within isoprenoid biosynthesis; isopentenyl diphosphate biosynthesis via DXP pathway; isopentenyl diphosphate from 1-deoxy-D-xylulose 5-phosphate: step 2/6. Its function is as follows. Catalyzes the formation of 4-diphosphocytidyl-2-C-methyl-D-erythritol from CTP and 2-C-methyl-D-erythritol 4-phosphate (MEP). The protein is 2-C-methyl-D-erythritol 4-phosphate cytidylyltransferase of Alkaliphilus oremlandii (strain OhILAs) (Clostridium oremlandii (strain OhILAs)).